A 104-amino-acid polypeptide reads, in one-letter code: Integration host factor subunit beta (104 aa).

It belongs to the bacterial histone-like protein family. In terms of assembly, heterodimer of an alpha and a beta chain.

Functionally, this protein is one of the two subunits of integration host factor, a specific DNA-binding protein that functions in genetic recombination as well as in transcriptional and translational control. In Neisseria gonorrhoeae, this protein is Integration host factor subunit beta (ihfB).